A 709-amino-acid polypeptide reads, in one-letter code: Phosphate acetyltransferase (709 aa).

A phosphate acetyltransferase region spans residues 389-709 (EFCYRLKILS…TIALTSIQSL (321 aa)).

This sequence in the N-terminal section; belongs to the CobB/CobQ family. In the C-terminal section; belongs to the phosphate acetyltransferase and butyryltransferase family. In terms of assembly, homohexamer.

Its subcellular location is the cytoplasm. It carries out the reaction acetyl-CoA + phosphate = acetyl phosphate + CoA. The protein operates within metabolic intermediate biosynthesis; acetyl-CoA biosynthesis; acetyl-CoA from acetate: step 2/2. Functionally, involved in acetate metabolism. This Buchnera aphidicola subsp. Schizaphis graminum (strain Sg) protein is Phosphate acetyltransferase (pta).